We begin with the raw amino-acid sequence, 232 residues long: Pseudaminic acid cytidylyltransferase (232 aa).

Belongs to the CMP-NeuNAc synthase family. Mg(2+) is required as a cofactor.

It carries out the reaction pseudaminate + CTP = CMP-pseudaminate + diphosphate. Catalyzes the final step in the biosynthesis of pseudaminic acid, a sialic-acid-like sugar that is used to modify flagellin. Mediates the activation of pseudaminic acid with CMP by forming CMP-pseudaminic acid. This chain is Pseudaminic acid cytidylyltransferase (pseF), found in Campylobacter jejuni subsp. jejuni serotype O:2 (strain ATCC 700819 / NCTC 11168).